A 103-amino-acid chain; its full sequence is uncharacterized protein (103 aa).

Residues 38–51 show a composition bias toward low complexity; sequence TTTTSSTTSASTTS. A disordered region spans residues 38 to 70; sequence TTTTSSTTSASTTSQPSFSLPTSCNSNSPQSNL. Residues 52-70 are compositionally biased toward polar residues; that stretch reads QPSFSLPTSCNSNSPQSNL.

This is an uncharacterized protein from Dictyostelium discoideum (Social amoeba).